Consider the following 63-residue polypeptide: ComG operon repressor (63 aa).

Its function is as follows. Negatively regulates the transcription of the comG operon. In Bacillus subtilis (strain 168), this protein is ComG operon repressor (comZ).